Here is a 228-residue protein sequence, read N- to C-terminus: Cytidylate kinase (228 aa).

12 to 20 (GPSGSGKGT) is a binding site for ATP.

It belongs to the cytidylate kinase family. Type 1 subfamily.

Its subcellular location is the cytoplasm. The enzyme catalyses CMP + ATP = CDP + ADP. It carries out the reaction dCMP + ATP = dCDP + ADP. This chain is Cytidylate kinase, found in Pseudomonas putida (strain ATCC 47054 / DSM 6125 / CFBP 8728 / NCIMB 11950 / KT2440).